We begin with the raw amino-acid sequence, 207 residues long: Antitermination protein Q (207 aa).

The disordered stretch occupies residues 1–28; sequence MRLESVAKFHSPKSPMMSDSPRATASDS. 4 residues coordinate Zn(2+): C118, C121, C144, and C147. A zinc finger lies at 118 to 147; the sequence is CRNCHGTGRAVDIAKTEQWGRVVEKECGRC. The DNA-binding element occupies 171–192; the sequence is LTQPTWSRTVKPLYDALVVQCH.

It belongs to the phage antitermination Q type 2 family. Interacts with host RPOB (via flap domain); this interaction renders host RNAP resistant to transcription pausing and allows it to read through termination signals. Interacts with host RNA polymerase sigma factor RPOD (via domain-4). Interacts with host NusA (via N-terminus and AR2 domain); this interaction releases the autoinhibition of NusA.

Mediates the switch from middle to viral late gene expression by associating with host RNA polymerase (RNAP) so that the latter can read without pausing and through transcription terminators preceding late genes. Competes with host factor sigma 70 for binding to RPOB, the beta-subunit of host RNAP. To join the elongation complex, binds a specific DNA Q-binding element (QBE) and interacts with RNAP that is paused during early elongation. Participates in the lysis-lysogeny decision by activating the expression of the late lytic genes. This chain is Antitermination protein Q (23), found in Salmonella typhimurium.